The following is a 164-amino-acid chain: Large ribosomal subunit protein bL9 (164 aa).

This sequence belongs to the bacterial ribosomal protein bL9 family.

Functionally, binds to the 23S rRNA. The polypeptide is Large ribosomal subunit protein bL9 (Borrelia recurrentis (strain A1)).